Here is a 416-residue protein sequence, read N- to C-terminus: Exodeoxyribonuclease 7 large subunit (416 aa).

This sequence belongs to the XseA family. In terms of assembly, heterooligomer composed of large and small subunits.

It localises to the cytoplasm. The enzyme catalyses Exonucleolytic cleavage in either 5'- to 3'- or 3'- to 5'-direction to yield nucleoside 5'-phosphates.. Bidirectionally degrades single-stranded DNA into large acid-insoluble oligonucleotides, which are then degraded further into small acid-soluble oligonucleotides. This chain is Exodeoxyribonuclease 7 large subunit, found in Acidothermus cellulolyticus (strain ATCC 43068 / DSM 8971 / 11B).